Here is a 200-residue protein sequence, read N- to C-terminus: Urease accessory protein UreG (200 aa).

A GTP-binding site is contributed by Gly11–Thr18.

This sequence belongs to the SIMIBI class G3E GTPase family. UreG subfamily. As to quaternary structure, homodimer. UreD, UreF and UreG form a complex that acts as a GTP-hydrolysis-dependent molecular chaperone, activating the urease apoprotein by helping to assemble the nickel containing metallocenter of UreC. The UreE protein probably delivers the nickel.

Its subcellular location is the cytoplasm. Functionally, facilitates the functional incorporation of the urease nickel metallocenter. This process requires GTP hydrolysis, probably effectuated by UreG. The protein is Urease accessory protein UreG of Thermosynechococcus vestitus (strain NIES-2133 / IAM M-273 / BP-1).